Reading from the N-terminus, the 366-residue chain is D-alanine--D-alanine ligase (366 aa).

Residues 140-346 (KALFAQSDLP…YGELLSRLVD (207 aa)) form the ATP-grasp domain. ATP is bound at residue 173 to 228 (EDRLGYPCFVKPANMGSSVGISKATNRAELVAAFDDAVRYDRKLIVEKGINVREIE). Mg(2+) contacts are provided by Asp299, Glu313, and Asn315.

This sequence belongs to the D-alanine--D-alanine ligase family. The cofactor is Mg(2+). Requires Mn(2+) as cofactor.

The protein localises to the cytoplasm. The catalysed reaction is 2 D-alanine + ATP = D-alanyl-D-alanine + ADP + phosphate + H(+). Its pathway is cell wall biogenesis; peptidoglycan biosynthesis. Cell wall formation. The polypeptide is D-alanine--D-alanine ligase (Heliobacterium modesticaldum (strain ATCC 51547 / Ice1)).